We begin with the raw amino-acid sequence, 621 residues long: Probable serine/threonine-protein kinase WNK2 (621 aa).

The 259-residue stretch at 28 to 286 (GRYTEVLGKG…AQELLMDPFL (259 aa)) folds into the Protein kinase domain. Residues 108 to 111 (TEVF) and lysine 158 contribute to the ATP site. Aspartate 175 functions as the Proton acceptor in the catalytic mechanism. Disordered stretches follow at residues 438-490 (SVEN…SDSP), 501-520 (VEPH…NDTD), 527-553 (GTSV…SPQS), and 600-621 (HREE…SDKP).

Belongs to the protein kinase superfamily. Ser/Thr protein kinase family. WNK subfamily.

The catalysed reaction is L-seryl-[protein] + ATP = O-phospho-L-seryl-[protein] + ADP + H(+). The enzyme catalyses L-threonyl-[protein] + ATP = O-phospho-L-threonyl-[protein] + ADP + H(+). The chain is Probable serine/threonine-protein kinase WNK2 (WNK2) from Oryza sativa subsp. japonica (Rice).